A 226-amino-acid polypeptide reads, in one-letter code: Lipoprotein-releasing system ATP-binding protein LolD (226 aa).

One can recognise an ABC transporter domain in the interval 6 to 226; it reads IELKSVERHY…TLADGKVVPL (221 aa). 42-49 contacts ATP; the sequence is APSGTGKS.

The protein belongs to the ABC transporter superfamily. Lipoprotein translocase (TC 3.A.1.125) family. In terms of assembly, the complex is composed of two ATP-binding proteins (LolD) and two transmembrane proteins (LolC and LolE).

The protein resides in the cell inner membrane. In terms of biological role, part of the ABC transporter complex LolCDE involved in the translocation of mature outer membrane-directed lipoproteins, from the inner membrane to the periplasmic chaperone, LolA. Responsible for the formation of the LolA-lipoprotein complex in an ATP-dependent manner. The sequence is that of Lipoprotein-releasing system ATP-binding protein LolD from Mesorhizobium japonicum (strain LMG 29417 / CECT 9101 / MAFF 303099) (Mesorhizobium loti (strain MAFF 303099)).